We begin with the raw amino-acid sequence, 272 residues long: Glutamate racemase (272 aa).

Substrate-binding positions include 16 to 17 (DS) and 48 to 49 (YG). Catalysis depends on Cys79, which acts as the Proton donor/acceptor. A substrate-binding site is contributed by 80-81 (NT). The active-site Proton donor/acceptor is Cys191. 192–193 (TH) contacts substrate.

This sequence belongs to the aspartate/glutamate racemases family.

The catalysed reaction is L-glutamate = D-glutamate. It functions in the pathway cell wall biogenesis; peptidoglycan biosynthesis. Provides the (R)-glutamate required for cell wall biosynthesis. The sequence is that of Glutamate racemase from Chlorobium phaeobacteroides (strain DSM 266 / SMG 266 / 2430).